Consider the following 297-residue polypeptide: N-acetylmuramoyl-L-alanine amidase XlyA (297 aa).

An N-terminal signal peptide occupies residues 1–44 (MVNIIQDFIPVGANNRPGYAMTPLYITVHNTANTAVGADAAAHA). The region spanning 45–140 (RYLKNPDTTT…KYWSGKECPR (96 aa)) is the N-acetylmuramoyl-L-alanine amidase domain. One can recognise a LysM domain in the interval 159–203 (QTYVVKQGDTLTSIARAFGVTVAQLQEWNNIEDPNLIRVGQVLIV).

This sequence belongs to the N-acetylmuramoyl-L-alanine amidase 2 family.

Its subcellular location is the secreted. The enzyme catalyses Hydrolyzes the link between N-acetylmuramoyl residues and L-amino acid residues in certain cell-wall glycopeptides.. Its function is as follows. Autolysins are involved in some important biological processes such as cell separation, cell-wall turnover, competence for genetic transformation, formation of the flagella and sporulation. This Bacillus subtilis (strain 168) protein is N-acetylmuramoyl-L-alanine amidase XlyA (xlyA).